The primary structure comprises 156 residues: Translation initiation factor IF-1, chloroplastic (156 aa).

The transit peptide at 1–81 (MASLSWWNPA…RRTTSIQCLS (81 aa)) directs the protein to the chloroplast. The segment at 51 to 79 (KSLLVKTQQQSKKKKNNSTNSRRTTSIQC) is disordered. Residues 67–76 (NSTNSRRTTS) show a composition bias toward low complexity. Positions 82–151 (QEQKWTHEGS…SKGRIIYRLR (70 aa)) constitute an S1-like domain.

Belongs to the IF-1 family. Component of the 30S ribosomal translation pre-initiation complex which assembles on the 30S ribosome in the order IF-2 and IF-3, IF-1 and N-formylmethionyl-tRNA(fMet); mRNA recruitment can occur at any time during PIC assembly.

Its subcellular location is the plastid. It is found in the chloroplast. In terms of biological role, one of the essential components for the initiation of protein synthesis. Stabilizes the binding of IF-2 and IF-3 on the 30S subunit to which N-formylmethionyl-tRNA(fMet) subsequently binds. Helps modulate mRNA selection, yielding the 30S pre-initiation complex (PIC). Upon addition of the 50S ribosomal subunit IF-1, IF-2 and IF-3 are released leaving the mature 70S translation initiation complex. This is Translation initiation factor IF-1, chloroplastic (infA) from Solanum lycopersicum (Tomato).